The primary structure comprises 169 residues: Peptide deformylase (169 aa).

Fe cation contacts are provided by Cys-91 and His-133. Glu-134 is a catalytic residue. A Fe cation-binding site is contributed by His-137.

This sequence belongs to the polypeptide deformylase family. Fe(2+) serves as cofactor.

It catalyses the reaction N-terminal N-formyl-L-methionyl-[peptide] + H2O = N-terminal L-methionyl-[peptide] + formate. Removes the formyl group from the N-terminal Met of newly synthesized proteins. Requires at least a dipeptide for an efficient rate of reaction. N-terminal L-methionine is a prerequisite for activity but the enzyme has broad specificity at other positions. This is Peptide deformylase from Salmonella arizonae (strain ATCC BAA-731 / CDC346-86 / RSK2980).